The primary structure comprises 226 residues: 1-hydroxy-2-glutathionyl-2-methyl-3-butene dehydrogenase (226 aa).

Belongs to the short-chain dehydrogenases/reductases (SDR) family.

The catalysed reaction is 2-glutathionyl-2-methylbut-3-en-1-ol + 2 NAD(+) + H2O = 2-glutathionyl-2-methylbut-3-enoate + 2 NADH + 3 H(+). The enzyme catalyses 2-glutathionyl-2-methylbut-3-en-1-ol + NAD(+) = 2-glutathionyl-2-methylbut-3-enal + NADH + H(+). It carries out the reaction 2-glutathionyl-2-methylbut-3-enal + NAD(+) + H2O = 2-glutathionyl-2-methylbut-3-enoate + NADH + 2 H(+). Its function is as follows. Involved in isoprene degradation. Catalyzes the two-step NAD(+)-dependent oxidation of 2-glutathionyl-2-methylbut-3-en-1-ol (HGMB) to 2-glutathionyl-2-methylbut-3-enoate (GMBA). This Rhodococcus sp. (strain AD45) protein is 1-hydroxy-2-glutathionyl-2-methyl-3-butene dehydrogenase.